Here is a 257-residue protein sequence, read N- to C-terminus: Probable pectate lyase G (257 aa).

Positions 1-24 (MPVLSKLLPTLTLTLPLLAGPCLA) are cleaved as a signal peptide.

This sequence belongs to the polysaccharide lyase 3 family. It depends on Ca(2+) as a cofactor.

The protein localises to the secreted. The catalysed reaction is Eliminative cleavage of (1-&gt;4)-alpha-D-galacturonan to give oligosaccharides with 4-deoxy-alpha-D-galact-4-enuronosyl groups at their non-reducing ends.. Its function is as follows. Pectinolytic enzyme consist of four classes of enzymes: pectin lyase, polygalacturonase, pectin methylesterase and rhamnogalacturonase. Among pectinolytic enzymes, pectin lyase is the most important in depolymerization of pectin, since it cleaves internal glycosidic bonds of highly methylated pectins. Favors pectate, the anion, over pectin, the methyl ester. The polypeptide is Probable pectate lyase G (plyG) (Emericella nidulans (strain FGSC A4 / ATCC 38163 / CBS 112.46 / NRRL 194 / M139) (Aspergillus nidulans)).